Consider the following 177-residue polypeptide: ADP-ribosylation factor-like protein 17 (177 aa).

The N-myristoyl glycine moiety is linked to residue glycine 2. GTP-binding positions include 24–31 (SLDTAGKT), 67–71 (DVGSH), and 125–128 (LPHS).

This sequence belongs to the small GTPase superfamily. Arf family.

The protein resides in the golgi apparatus. In terms of biological role, GTP-binding protein that functions as an allosteric activator of the cholera toxin catalytic subunit, an ADP-ribosyltransferase. Involved in protein trafficking; may modulate vesicle budding and uncoating within the Golgi apparatus. The protein is ADP-ribosylation factor-like protein 17 (ARL17A) of Homo sapiens (Human).